A 344-amino-acid chain; its full sequence is 4'-phosphopantetheinyl transferase NpgA (344 aa).

It belongs to the P-Pant transferase superfamily.

It carries out the reaction apo-[ACP] + CoA = holo-[ACP] + adenosine 3',5'-bisphosphate + H(+). In terms of biological role, transfers the 4'-phosphopantetheine moiety from coenzyme A to a Ser of an acyl-carrier-protein. The enzyme is able to transfer the cofactor to a broad range of enzymes with acyl- or peptidyl-carrier protein domains. Required for primary biological processes such as growth and asexual/sexual development, and activates target enzymes involved in the synthesis of metabolites such as fatty acids, polyketides and nonribosomal peptides, lysine, siderophore, penicillin, sterigmatocystin, shamixantone, dehydroaustinol, and pigments. This Emericella nidulans (strain FGSC A4 / ATCC 38163 / CBS 112.46 / NRRL 194 / M139) (Aspergillus nidulans) protein is 4'-phosphopantetheinyl transferase NpgA (npgA).